Reading from the N-terminus, the 354-residue chain is Ephrin-4 (354 aa).

Positions 1–22 are cleaved as a signal peptide; the sequence is MKRPLDFLLAICLILLRSSTFA. One can recognise an Ephrin RBD domain in the interval 23–173; sequence DEHTVHWNST…SKNMRLSMKV (151 aa). N30 is a glycosylation site (N-linked (GlcNAc...) asparagine). 2 disulfides stabilise this stretch: C55–C92 and C80–C162. Residues 173–196 form a disordered region; the sequence is VLSSQPTPSPSSKPARSRTDARRQ. The segment covering 175–186 has biased composition (low complexity); sequence SSQPTPSPSSKP. Residue S335 is the site of GPI-anchor amidated serine attachment. A propeptide spans 336 to 354 (removed in mature form); sequence SSSLPTFLIVFLIAVNLLF.

It belongs to the ephrin family. In terms of processing, may undergo proteolysis by metalloprotease sup-17 to give rise to a soluble form.

The protein resides in the cell membrane. Functionally, regulates the formation or stabilization of cell-cell contacts at several stages of epithelial morphogenesis. In early embryonic development, involved in ventral closure of the epidermis. During male tail morphogenesis, regulates precursor cell sorting together with mab-20 and allows the formation of distinct sensory rays. Probably acts as a ligand for lad-2 to regulate axon guidance of several neurons including SDQL, SDQR, SMD and PLN neurons during neurogenesis. The sequence is that of Ephrin-4 (efn-4) from Caenorhabditis briggsae.